The chain runs to 299 residues: Bifunctional protein FolD 1 (299 aa).

NADP(+)-binding positions include Gly168 to Ser170, Ser193, and Ile234.

Belongs to the tetrahydrofolate dehydrogenase/cyclohydrolase family. Homodimer.

The catalysed reaction is (6R)-5,10-methylene-5,6,7,8-tetrahydrofolate + NADP(+) = (6R)-5,10-methenyltetrahydrofolate + NADPH. It catalyses the reaction (6R)-5,10-methenyltetrahydrofolate + H2O = (6R)-10-formyltetrahydrofolate + H(+). The protein operates within one-carbon metabolism; tetrahydrofolate interconversion. In terms of biological role, catalyzes the oxidation of 5,10-methylenetetrahydrofolate to 5,10-methenyltetrahydrofolate and then the hydrolysis of 5,10-methenyltetrahydrofolate to 10-formyltetrahydrofolate. This chain is Bifunctional protein FolD 1, found in Mesorhizobium japonicum (strain LMG 29417 / CECT 9101 / MAFF 303099) (Mesorhizobium loti (strain MAFF 303099)).